Consider the following 135-residue polypeptide: uncharacterized protein (135 aa).

This is an uncharacterized protein from Magallana gigas (Pacific oyster).